Reading from the N-terminus, the 89-residue chain is Small ribosomal subunit protein uS17 (89 aa).

This sequence belongs to the universal ribosomal protein uS17 family. In terms of assembly, part of the 30S ribosomal subunit.

In terms of biological role, one of the primary rRNA binding proteins, it binds specifically to the 5'-end of 16S ribosomal RNA. The chain is Small ribosomal subunit protein uS17 from Phytoplasma mali (strain AT).